A 155-amino-acid polypeptide reads, in one-letter code: Ribosomal RNA large subunit methyltransferase H (155 aa).

S-adenosyl-L-methionine contacts are provided by residues Leu73, Gly104, and 123-128 (LSPLTL).

This sequence belongs to the RNA methyltransferase RlmH family. Homodimer.

Its subcellular location is the cytoplasm. It carries out the reaction pseudouridine(1915) in 23S rRNA + S-adenosyl-L-methionine = N(3)-methylpseudouridine(1915) in 23S rRNA + S-adenosyl-L-homocysteine + H(+). Specifically methylates the pseudouridine at position 1915 (m3Psi1915) in 23S rRNA. This chain is Ribosomal RNA large subunit methyltransferase H, found in Azotobacter vinelandii (strain DJ / ATCC BAA-1303).